Consider the following 338-residue polypeptide: Eukaryotic translation initiation factor 3 subunit H (338 aa).

Positions 22-154 (VQCDGLAVMK…LKAYRLTPQA (133 aa)) constitute an MPN domain.

Belongs to the eIF-3 subunit H family. In terms of assembly, component of the eukaryotic translation initiation factor 3 (eIF-3) complex. The eIF-3 complex interacts with pix. Interacts with mxt.

It is found in the cytoplasm. In terms of biological role, component of the eukaryotic translation initiation factor 3 (eIF-3) complex, which is involved in protein synthesis of a specialized repertoire of mRNAs and, together with other initiation factors, stimulates binding of mRNA and methionyl-tRNAi to the 40S ribosome. The eIF-3 complex specifically targets and initiates translation of a subset of mRNAs involved in cell proliferation. The chain is Eukaryotic translation initiation factor 3 subunit H from Drosophila melanogaster (Fruit fly).